The following is a 154-amino-acid chain: MRSPCPCNSGKLYADCCAPFISKDALPATPEQLMRSRYSAFVIQDGDYLIATWHPQAVAEAWRDEITAGFRTTRWRDLAVQECAAGQDSDSGYVTFLALFYDERQRRNGFIHERSRFVRLNERWYYVDGRHIVPGRNAPCPCGSGLKYKKCCEQ.

This sequence belongs to the UPF0225 family.

The polypeptide is UPF0225 protein SG1365 (Sodalis glossinidius (strain morsitans)).